A 460-amino-acid chain; its full sequence is UDP-glucuronate 4-epimerase 6 (460 aa).

2 consecutive transmembrane segments (helical) span residues 41–61 (ATLLVALVLVLIFAINYPPLS) and 111–131 (GLSVLVTGAAGFVGSHCSLAL). Position 113–144 (113–144 (SVLVTGAAGFVGSHCSLALRKRGDGVLGFDNF)) interacts with NAD(+). Residue tyrosine 263 is the Proton acceptor of the active site.

This sequence belongs to the NAD(P)-dependent epimerase/dehydratase family. As to quaternary structure, homodimer. As to expression, in roots, leaf veins, siliques, flowers, pollen and stems.

It localises to the golgi apparatus. It is found in the golgi stack membrane. It carries out the reaction UDP-alpha-D-glucuronate = UDP-alpha-D-galacturonate. Involved in the synthesis of the negatively charged monosaccharide that forms the backbone of pectic cell wall components. The chain is UDP-glucuronate 4-epimerase 6 (GAE6) from Arabidopsis thaliana (Mouse-ear cress).